The primary structure comprises 520 residues: GMP synthase [glutamine-hydrolyzing] (520 aa).

The Glutamine amidotransferase type-1 domain maps to K13–D205. C90 acts as the Nucleophile in catalysis. Residues H179 and E181 contribute to the active site. Positions W206 to R395 constitute a GMPS ATP-PPase domain. S233–S239 contributes to the ATP binding site.

Homodimer.

It catalyses the reaction XMP + L-glutamine + ATP + H2O = GMP + L-glutamate + AMP + diphosphate + 2 H(+). Its pathway is purine metabolism; GMP biosynthesis; GMP from XMP (L-Gln route): step 1/1. In terms of biological role, catalyzes the synthesis of GMP from XMP. This is GMP synthase [glutamine-hydrolyzing] from Streptococcus pneumoniae (strain ATCC 700669 / Spain 23F-1).